The chain runs to 673 residues: UvrABC system protein B (673 aa).

The Helicase ATP-binding domain maps to 26-183; it reads EGLEDGLAHQ…RRLAELQYAR (158 aa). Residue 39-46 coordinates ATP; it reads GVTGSGKT. The short motif at 92-115 is the Beta-hairpin element; it reads YYDYYQPEAYVPSSDTFIEKDASV. The Helicase C-terminal domain occupies 431–597; that stretch reads QVDDLLSEIR…GLNKKVVDIL (167 aa). The region spanning 633 to 668 is the UVR domain; that stretch reads QQKIHELEGLMMQHAQNLEFEEAAQVRDQLHQLRQL.

This sequence belongs to the UvrB family. Forms a heterotetramer with UvrA during the search for lesions. Interacts with UvrC in an incision complex.

Its subcellular location is the cytoplasm. Functionally, the UvrABC repair system catalyzes the recognition and processing of DNA lesions. A damage recognition complex composed of 2 UvrA and 2 UvrB subunits scans DNA for abnormalities. Upon binding of the UvrA(2)B(2) complex to a putative damaged site, the DNA wraps around one UvrB monomer. DNA wrap is dependent on ATP binding by UvrB and probably causes local melting of the DNA helix, facilitating insertion of UvrB beta-hairpin between the DNA strands. Then UvrB probes one DNA strand for the presence of a lesion. If a lesion is found the UvrA subunits dissociate and the UvrB-DNA preincision complex is formed. This complex is subsequently bound by UvrC and the second UvrB is released. If no lesion is found, the DNA wraps around the other UvrB subunit that will check the other stand for damage. This is UvrABC system protein B from Enterobacter sp. (strain 638).